The primary structure comprises 554 residues: (E)-nerolidol synthase TPS18VF (554 aa).

Positions 276, 313, 317, 455, and 458 each coordinate (2E,6E)-farnesyl diphosphate. 2 residues coordinate Mg(2+): Asp-313 and Asp-317. The DDXXD motif signature appears at 313-317 (DDIFD). Mg(2+) is bound by residues Asp-458, Ser-462, and Glu-466.

This sequence belongs to the terpene synthase family. Tpsb subfamily. The cofactor is Mg(2+). Requires Mn(2+) as cofactor. Highly expressed in glandular trichomes.

The catalysed reaction is (2E,6E)-farnesyl diphosphate + H2O = (6E)-nerolidol + diphosphate. It catalyses the reaction (2E)-geranyl diphosphate + H2O = (S)-linalool + diphosphate. It functions in the pathway secondary metabolite biosynthesis; terpenoid biosynthesis. Involved in sesquiterpene olefins biosynthesis, constituants of cannabinoids and terpenoids-rich resins. Catalyzes primarily the conversion of (2E)-farnesyl diphosphate to (E)-nerolidol, and the conversion of (2E)-geranyl diphosphate to (+)linalool. The protein is (E)-nerolidol synthase TPS18VF of Cannabis sativa (Hemp).